Consider the following 352-residue polypeptide: Pollen-specific protein SF21 (352 aa).

It belongs to the NDRG family. As to expression, pollen.

The polypeptide is Pollen-specific protein SF21 (SF21) (Helianthus annuus (Common sunflower)).